We begin with the raw amino-acid sequence, 248 residues long: Probable transcriptional regulatory protein Psyr_1407 (248 aa).

This sequence belongs to the TACO1 family.

The protein resides in the cytoplasm. This Pseudomonas syringae pv. syringae (strain B728a) protein is Probable transcriptional regulatory protein Psyr_1407.